The chain runs to 253 residues: MAELSTRYNLPANVTENSINLDLNSTARWIKEPSVGGWTVKWGNFVFHIPNTGMTLLHHLKSNFVVPEWQQTRNLFSHLFKNPKSTIIEPFLALRILLGVALKDQELQQSLIPGFRSIVHMLSEWLLLEVTSAIHISPNLLGIYLTSDMFKILMAGVKNFFNKMFTLHVVNDHGKPSSIEIKLTGQQIIITRVNMGFLVEVRRIDIEPCCGETVLSESVVFGLVAEAVLREHSQMEKGQPLNLTQYMNSKIAI.

It belongs to the filoviridae membrane-associated protein VP24 family. As to quaternary structure, monomer or homotetramer (Potential). Interacts with nucleoprotein.

It is found in the virion membrane. The protein localises to the host cell membrane. The protein resides in the host endomembrane system. In terms of biological role, may act as a minor matrix protein that plays a role in assembly of viral nucleocapsid and virion budding. Unlike Ebola VP24, mVP24 has no measurable impact of host dendritic cell function. The protein is Membrane-associated protein VP24 (VP24) of Chlorocebus aethiops (Green monkey).